The chain runs to 2451 residues: Reducing polyketide synthase 8 (2451 aa).

Residues 12-434 (NEPIAIVGSS…GTNAHAILEA (423 aa)) form the Ketosynthase family 3 (KS3) domain. Active-site for beta-ketoacyl synthase activity residues include C174, H313, and H354. Residues 538-846 (VFTGQGAQWA…GPATETINNM (309 aa)) enclose the Malonyl-CoA:ACP transacylase (MAT) domain. The N-terminal hotdog fold stretch occupies residues 940–1085 (HQLLGSASTF…GFLRIELGAP (146 aa)). One can recognise a PKS/mFAS DH domain in the interval 940–1254 (HQLLGSASTF…LLNLPGSLRS (315 aa)). The Proton acceptor; for dehydratase activity role is filled by H974. The interval 1100-1254 (LIPLDVEELY…LLNLPGSLRS (155 aa)) is C-terminal hotdog fold. The active-site Proton donor; for dehydratase activity is the D1160. The methyltransfrase (MT) domain stretch occupies residues 1294 to 1590 (LVLFYCQKVL…QHFCSVMLSQ (297 aa)). The Ketoreductase (KR) domain occupies 2088-2266 (TYLLLGLAGD…PGCVVHIGGV (179 aa)). Residues 2366–2451 (DACLDLLLGG…LAIWRKQVKA (86 aa)) form the Carrier domain. Residue S2404 is modified to O-(pantetheine 4'-phosphoryl)serine.

Requires pantetheine 4'-phosphate as cofactor.

The protein operates within secondary metabolite biosynthesis. Its function is as follows. Reducing polyketide synthase; part of the gene cluster that mediates the biosynthesis of fusamarins, isocoumarin derivatives that show moderate cytotoxicity with IC(50) values between 1 and 50 uM. The polyketide synthase FMN1 probably synthesizes two different polyketides, a tetra- and a pentaketide, containinga varying number of double bonds depending on the selective actions of the trans-enoyl reductase FMN2. Chain fusion will presumably be mediated by the KS domain before finally offloading is catalyzed by the alpha/beta hydrolase fold enzyme FMN3. The chain is Reducing polyketide synthase 8 from Fusarium mangiferae (Mango malformation disease fungus).